Consider the following 188-residue polypeptide: Elongation factor P (188 aa).

It belongs to the elongation factor P family.

It localises to the cytoplasm. The protein operates within protein biosynthesis; polypeptide chain elongation. Involved in peptide bond synthesis. Stimulates efficient translation and peptide-bond synthesis on native or reconstituted 70S ribosomes in vitro. Probably functions indirectly by altering the affinity of the ribosome for aminoacyl-tRNA, thus increasing their reactivity as acceptors for peptidyl transferase. This chain is Elongation factor P, found in Nitrobacter hamburgensis (strain DSM 10229 / NCIMB 13809 / X14).